A 74-amino-acid polypeptide reads, in one-letter code: Exodeoxyribonuclease 7 small subunit (74 aa).

It belongs to the XseB family. In terms of assembly, heterooligomer composed of large and small subunits.

The protein resides in the cytoplasm. The catalysed reaction is Exonucleolytic cleavage in either 5'- to 3'- or 3'- to 5'-direction to yield nucleoside 5'-phosphates.. Functionally, bidirectionally degrades single-stranded DNA into large acid-insoluble oligonucleotides, which are then degraded further into small acid-soluble oligonucleotides. In Glaesserella parasuis serovar 5 (strain SH0165) (Haemophilus parasuis), this protein is Exodeoxyribonuclease 7 small subunit.